The following is a 389-amino-acid chain: Probable dual-specificity RNA methyltransferase RlmN (389 aa).

The active-site Proton acceptor is the glutamate 114. Residues 120–358 (QHYGLSVCVT…CVVRQEHGTD (239 aa)) form the Radical SAM core domain. A disulfide bond links cysteine 127 and cysteine 363. Residues cysteine 134, cysteine 138, and cysteine 141 each contribute to the [4Fe-4S] cluster site. Residues 186-187 (GE), serine 218, 241-243 (SLH), and asparagine 319 each bind S-adenosyl-L-methionine. The active-site S-methylcysteine intermediate is the cysteine 363. The interval 370 to 389 (TMKRDRQKAVAEASGKSEGK) is disordered. Positions 371–389 (MKRDRQKAVAEASGKSEGK) are enriched in basic and acidic residues.

The protein belongs to the radical SAM superfamily. RlmN family. It depends on [4Fe-4S] cluster as a cofactor.

It localises to the cytoplasm. It catalyses the reaction adenosine(2503) in 23S rRNA + 2 reduced [2Fe-2S]-[ferredoxin] + 2 S-adenosyl-L-methionine = 2-methyladenosine(2503) in 23S rRNA + 5'-deoxyadenosine + L-methionine + 2 oxidized [2Fe-2S]-[ferredoxin] + S-adenosyl-L-homocysteine. The catalysed reaction is adenosine(37) in tRNA + 2 reduced [2Fe-2S]-[ferredoxin] + 2 S-adenosyl-L-methionine = 2-methyladenosine(37) in tRNA + 5'-deoxyadenosine + L-methionine + 2 oxidized [2Fe-2S]-[ferredoxin] + S-adenosyl-L-homocysteine. In terms of biological role, specifically methylates position 2 of adenine 2503 in 23S rRNA and position 2 of adenine 37 in tRNAs. This is Probable dual-specificity RNA methyltransferase RlmN from Streptococcus thermophilus (strain ATCC BAA-250 / LMG 18311).